The primary structure comprises 300 residues: Matrix protein (300 aa).

A disordered region spans residues 1–36; sequence MHMFPLGVVEDSDPPGPPIGRASGSPPPGAGRSTAK.

As to quaternary structure, homodimer. Dimerization is critical for virion formation. Interacts with host ANP32B.

It localises to the virion. The protein localises to the host cell membrane. In terms of biological role, the M protein has a crucial role in virus assembly and interacts with the RNP complex as well as with the viral membrane. Associates with phosphatidylserine (PS) and phosphatidylinositol 4,5-bisphosphate (PIP2) at the plasma membrane. Interaction with PIP2 triggers matrix protein lattice polymerization. Matrix proteins induce host membrane deformation and curvature necessary for virion assembly/budding. This Measles virus (strain Yamagata-1) (MeV) protein is Matrix protein (M).